The sequence spans 121 residues: Natriuretic peptides B (121 aa).

A signal peptide spans 1 to 26 (MDLQKVLPQMILLLLFLNLSPLGGHS). Residues Cys99 and Cys115 are joined by a disulfide bond.

The protein belongs to the natriuretic peptide family. In terms of processing, the precursor molecule is proteolytically cleaved by the endoprotease Furin to produce brain natriuretic peptide 45. May undergo further proteolytic cleavage by various proteases such as DPP4, MME and possibly FAP, to give rise to a variety of shorter peptides. May be cleaved at Ser-91 by the prolyl endopeptidase FAP (seprase) activity (in vitro). May be degraded by IDE. During IDE degradation, the resulting products initially increase the activation of NPR1 and can also stimulate NPR2 to produce cGMP before the fragments are completely degraded and inactivated by IDE (in vitro). As to expression, expressed in the atria and ventricles, but at much lower levels than NPPA. Expression levels in the ventricles are slightly higher than in the atria. Very low levels of expression detected in the brain, hypothalamus, lung and aorta. In terms of tissue distribution, atria (at protein level). Cardiocytes (at protein level).

It localises to the secreted. In terms of biological role, cardiac hormone that plays a key role in mediating cardio-renal homeostasis. May also function as a paracrine antifibrotic factor in the heart. Acts by specifically binding and stimulating NPR1 to produce cGMP, which in turn activates effector proteins that drive various biological responses. Likely involved in regulating the extracellular fluid volume and maintaining the fluid-electrolyte balance through natriuresis, diuresis, kaluresis and chloruresis. The chain is Natriuretic peptides B (Nppb) from Rattus norvegicus (Rat).